The sequence spans 996 residues: Sarcoplasmic/endoplasmic reticulum calcium ATPase 1 (996 aa).

Residues 1-48 (MENAHTKSPAECLSYFGVNEHTGLSPDQFKKNLDKFGYNELPAEEGKS) lie on the Cytoplasmic side of the membrane. The chain crosses the membrane as a helical span at residues 49–69 (IWDLIVEQFEDLLVRILLLAA). Residues 70–89 (CISFVLAWFEEGEETITAFV) are Lumenal-facing. A helical transmembrane segment spans residues 90-110 (EPFVILLILIANAIVGVWQER). The Cytoplasmic portion of the chain corresponds to 111 to 253 (NAEDAIEALK…QEKTPLQAKL (143 aa)). The helical transmembrane segment at 254-273 (DEFGEQLSKVISLICVAVWA) threads the bilayer. The Lumenal segment spans residues 274–295 (INIGHFNDPVHGGSWIRGAVYY). A helical transmembrane segment spans residues 296–313 (FKIAVALAVAAIPEGLPA). Residues valine 304, alanine 305, isoleucine 307, and glutamate 309 each coordinate Ca(2+). Residues 314-754 (VITTCLALGT…EEGRAIYNNM (441 aa)) lie on the Cytoplasmic side of the membrane. The 4-aspartylphosphate intermediate role is filled by aspartate 351. The Mg(2+) site is built by aspartate 351 and threonine 353. Threonine 353, glutamate 442, arginine 489, lysine 512, arginine 557, threonine 622, glycine 623, aspartate 624, arginine 675, and lysine 681 together coordinate ATP. Residue aspartate 700 coordinates Mg(2+). Residue asparagine 703 participates in ATP binding. The helical transmembrane segment at 755 to 774 (KQFIRYLISSNVGEVVCIFL) threads the bilayer. Ca(2+)-binding residues include asparagine 765 and glutamate 768. Residues 775-784 (TAALGLPEAL) are Lumenal-facing. Residues 785–805 (IPVQLLWVNLVTDGLPATALG) traverse the membrane as a helical segment. Residues 785-805 (IPVQLLWVNLVTDGLPATALG) form an interaction with PLN region. Ca(2+)-binding residues include asparagine 793, threonine 796, and aspartate 797. Residues 806 to 825 (FNPPDLDIMGKPPRSPKEPL) lie on the Cytoplasmic side of the membrane. The chain crosses the membrane as a helical span at residues 826 to 848 (ISGWLFFRYMAIGGYVGAATVGG). Residues 849–894 (AAWWFLYDSTGPAVTYYQLSHFMQCHNHNEDFTGVDCDIFEASPPM) are Lumenal-facing. A disulfide bond links cysteine 873 and cysteine 885. Residues 895–914 (TMALSVLVTIEMCNALNSLS) traverse the membrane as a helical segment. Glutamate 905 provides a ligand contact to Ca(2+). Topologically, residues 915–927 (ENQSLIRMPPWSN) are cytoplasmic. A helical membrane pass occupies residues 928-946 (LWLMAAMTLSMSLHFMIIY). Residues 929-940 (WLMAAMTLSMSL) form an interaction with PLN region. The Lumenal segment spans residues 947–961 (VDPLPMIFKLTHLTF). Residues 962–982 (DQWLMVFKLSFPVILIDEVLK) traverse the membrane as a helical segment. At 983 to 996 (FFARNYIETGKEVK) the chain is on the cytoplasmic side.

It belongs to the cation transport ATPase (P-type) (TC 3.A.3) family. Type IIA subfamily. Interacts with sarcolipin (SLN). Interacts with phospholamban (PLN). Interacts with myoregulin (MRLN). Interacts with DWORF. It depends on Mg(2+) as a cofactor.

The protein resides in the endoplasmic reticulum membrane. It is found in the sarcoplasmic reticulum membrane. The catalysed reaction is Ca(2+)(in) + ATP + H2O = Ca(2+)(out) + ADP + phosphate + H(+). With respect to regulation, inhibited by sarcolipin (SLN) and myoregulin (MRLN). Also shown to be inhibited by phospholamban (PLN) in vitro. Enhanced by DWORF; DWORF increases activity by displacing sarcolipin (SLN), phospholamban (PLN) and myoregulin (MRLN). Its function is as follows. Key regulator of striated muscle performance by acting as the major Ca(2+) ATPase responsible for the reuptake of cytosolic Ca(2+) into the sarcoplasmic reticulum. Catalyzes the hydrolysis of ATP coupled with the translocation of calcium from the cytosol to the sarcoplasmic reticulum lumen. Contributes to calcium sequestration involved in muscular excitation/contraction. This is Sarcoplasmic/endoplasmic reticulum calcium ATPase 1 (atp2a1) from Makaira nigricans (Atlantic blue marlin).